We begin with the raw amino-acid sequence, 491 residues long: Putative mannan endo-1,4-beta-mannosidase 5 (491 aa).

The N-terminal stretch at 1 to 31 (METSYREEEARRKASLLHCIFFFLLGALAMA) is a signal peptide. Residues Trp-134 and Asn-248 each contribute to the substrate site. Glu-249 serves as the catalytic Proton donor. Residue Tyr-330 participates in substrate binding. The active-site Nucleophile is the Glu-372. The N-linked (GlcNAc...) asparagine glycan is linked to Asn-385. Residue Trp-416 coordinates substrate. The N-linked (GlcNAc...) asparagine glycan is linked to Asn-471.

It belongs to the glycosyl hydrolase 5 (cellulase A) family. As to expression, expression not detected.

It is found in the secreted. The enzyme catalyses Random hydrolysis of (1-&gt;4)-beta-D-mannosidic linkages in mannans, galactomannans and glucomannans.. The sequence is that of Putative mannan endo-1,4-beta-mannosidase 5 (MAN5) from Oryza sativa subsp. japonica (Rice).